Here is a 322-residue protein sequence, read N- to C-terminus: Mas-related G-protein coupled receptor member X3 (322 aa).

The Extracellular segment spans residues 1–31 (MDSTIPVLGTELTPINGREETPCYKQTLSFT). Residues 32–52 (GLTCIVSLVALTGNAVVLWLL) traverse the membrane as a helical segment. The Cytoplasmic portion of the chain corresponds to 53–60 (GCRMRRNA). A helical transmembrane segment spans residues 61-81 (VSIYILNLVAADFLFLSGHII). The Extracellular segment spans residues 82–96 (CSPLRLINIRHPISK). A helical membrane pass occupies residues 97-117 (ILSPVMTFPYFIGLSMLSAIS). Over 118 to 140 (TERCLSILWPIWYHCRRPRYLSS) the chain is Cytoplasmic. Residues 141–161 (VMCVLLWALSLLRSILEWMFC) form a helical membrane-spanning segment. The Extracellular portion of the chain corresponds to 162–177 (DFLFSGANSVWCETSD). A helical transmembrane segment spans residues 178–198 (FITIAWLVFLCVVLCGSSLVL). At 199 to 213 (LVRILCGSRKMPLTR) the chain is on the cytoplasmic side. A helical membrane pass occupies residues 214–234 (LYVTILLTVLVFLLCGLPFGI). Over 235 to 254 (QWALFSRIHLDWKVLFCHVH) the chain is Extracellular. A helical membrane pass occupies residues 255–275 (LVSIFLSALNSSANPIIYFFV). Residues 276-322 (GSFRQRQNRQNLKLVLQRALQDTPEVDEGGGWLPQETLELSGSRLEQ) lie on the Cytoplasmic side of the membrane.

This sequence belongs to the G-protein coupled receptor 1 family. Mas subfamily. Uniquely localized in a subset of small dorsal root and trigeminal sensory neurons.

It localises to the cell membrane. Functionally, orphan receptor. Probably involved in the function of nociceptive neurons. May regulate nociceptor function and/or development, including the sensation or modulation of pain. Potently activated by enkephalins. This is Mas-related G-protein coupled receptor member X3 (MRGPRX3) from Homo sapiens (Human).